The primary structure comprises 132 residues: Small ribosomal subunit protein uS8 (132 aa).

It belongs to the universal ribosomal protein uS8 family. In terms of assembly, part of the 30S ribosomal subunit. Contacts proteins S5 and S12.

In terms of biological role, one of the primary rRNA binding proteins, it binds directly to 16S rRNA central domain where it helps coordinate assembly of the platform of the 30S subunit. The polypeptide is Small ribosomal subunit protein uS8 (Chelativorans sp. (strain BNC1)).